The chain runs to 223 residues: Ribonuclease 3 (223 aa).

Residues 3–125 enclose the RNase III domain; that stretch reads LERLQKKLGY…IIAAVYLDAG (123 aa). A Mg(2+)-binding site is contributed by glutamate 38. The active site involves aspartate 42. 2 residues coordinate Mg(2+): aspartate 111 and glutamate 114. Residue glutamate 114 is part of the active site. Residues 152 to 222 form the DRBM domain; sequence DPKTRLQEYL…ALQVIKVLGI (71 aa).

This sequence belongs to the ribonuclease III family. In terms of assembly, homodimer. It depends on Mg(2+) as a cofactor.

Its subcellular location is the cytoplasm. The enzyme catalyses Endonucleolytic cleavage to 5'-phosphomonoester.. Functionally, digests double-stranded RNA. Involved in the processing of primary rRNA transcript to yield the immediate precursors to the large and small rRNAs (23S and 16S). Processes some mRNAs, and tRNAs when they are encoded in the rRNA operon. Processes pre-crRNA and tracrRNA of type II CRISPR loci if present in the organism. This is Ribonuclease 3 from Glaesserella parasuis serovar 5 (strain SH0165) (Haemophilus parasuis).